The following is a 343-amino-acid chain: Protein RecA (343 aa).

66 to 73 (GPESSGKT) provides a ligand contact to ATP.

The protein belongs to the RecA family.

Its subcellular location is the cytoplasm. In terms of biological role, can catalyze the hydrolysis of ATP in the presence of single-stranded DNA, the ATP-dependent uptake of single-stranded DNA by duplex DNA, and the ATP-dependent hybridization of homologous single-stranded DNAs. It interacts with LexA causing its activation and leading to its autocatalytic cleavage. This is Protein RecA from Nitrosomonas eutropha (strain DSM 101675 / C91 / Nm57).